The following is a 439-amino-acid chain: MRLSRFFLPILKENPKEAEIVSHRLMLRAGMLRQEAAGIYAWLPLGHRVLKKIEQIVREEQNRAGAIELLMPTLQLADLWRESGRYDAYGPEMLRIADRHKRELLYGPTNEEMITEIFRAYVKSYKSLPLNLYHIQWKFRDEQRPRFGVMRGREFLMKDAYSFDVDEAAARKSYNRMFVAYLRTFARMGLKAIPMRAETGPIGGDLSHEFIVLAETGESGVYCDRDVLNLPVPGEDVDYDGDLTPIIQQWTSVYAATEDVHDAARYESEVPEANRLNTRGIEVGQIFYFGTKYSDSMKANVAGPDGADAPIHGGSYGVGVSRLVGAIIEACHDENGIKWPEEVAPFRVAILNLKQGDAQTDAACEQLYRELAAKGVDVLYDDTDQRAGAKFATADLIGIPWQVLVGPKGLADGKVELKRRSDGSRETIALAEAVARLAP.

This sequence belongs to the class-II aminoacyl-tRNA synthetase family. ProS type 2 subfamily. In terms of assembly, homodimer.

The protein resides in the cytoplasm. It catalyses the reaction tRNA(Pro) + L-proline + ATP = L-prolyl-tRNA(Pro) + AMP + diphosphate. In terms of biological role, catalyzes the attachment of proline to tRNA(Pro) in a two-step reaction: proline is first activated by ATP to form Pro-AMP and then transferred to the acceptor end of tRNA(Pro). The chain is Proline--tRNA ligase from Rhodopseudomonas palustris (strain BisB5).